Here is a 76-residue protein sequence, read N- to C-terminus: Esculentin-2MT3 (76 aa).

A signal peptide spans 1–22; it reads MFTLKKSMLLLFFLGTISLSLC. A propeptide spans 23–37 (removed in mature form); sequence EEERNADEDDGEKEV. Cys-70 and Cys-76 form a disulfide bridge.

This sequence belongs to the frog skin active peptide (FSAP) family. Esculentin subfamily. In terms of tissue distribution, expressed by the skin glands.

It localises to the secreted. Antimicrobial peptide. This is Esculentin-2MT3 from Amolops mantzorum (Sichuan torrent frog).